The following is a 193-amino-acid chain: Peptidyl-tRNA hydrolase (193 aa).

Tyr14 contributes to the tRNA binding site. His19 functions as the Proton acceptor in the catalytic mechanism. The tRNA site is built by Phe64, Asn66, and Asn112.

It belongs to the PTH family. As to quaternary structure, monomer.

The protein localises to the cytoplasm. The enzyme catalyses an N-acyl-L-alpha-aminoacyl-tRNA + H2O = an N-acyl-L-amino acid + a tRNA + H(+). Its function is as follows. Hydrolyzes ribosome-free peptidyl-tRNAs (with 1 or more amino acids incorporated), which drop off the ribosome during protein synthesis, or as a result of ribosome stalling. Catalyzes the release of premature peptidyl moieties from peptidyl-tRNA molecules trapped in stalled 50S ribosomal subunits, and thus maintains levels of free tRNAs and 50S ribosomes. The chain is Peptidyl-tRNA hydrolase from Bartonella henselae (strain ATCC 49882 / DSM 28221 / CCUG 30454 / Houston 1) (Rochalimaea henselae).